The sequence spans 438 residues: Protein DJ-1 homolog B (438 aa).

The transit peptide at 1-45 (MASSSLCHRYFNKITVTPFFNTKKLHHYSPRRISLRVNRRSFSIS) directs the protein to the chloroplast. 2 consecutive PfpI endopeptidase domains span residues 53 to 220 (KKVL…EQLL) and 258 to 424 (PQIL…EKFY).

It belongs to the peptidase C56 family. In terms of assembly, homodimer.

Its subcellular location is the plastid. The protein localises to the chloroplast. Functionally, may be involved in oxidative stress response. In Arabidopsis thaliana (Mouse-ear cress), this protein is Protein DJ-1 homolog B (DJ1B).